The sequence spans 360 residues: G-protein coupled receptor 15 (360 aa).

Over 1–33 the chain is Extracellular; it reads MEPATALLIVDYYDYTSPDPPFLETPSHLSYTS. Residues 34-54 form a helical membrane-spanning segment; that stretch reads VFLPIFYTVVFLTGVVGNFIL. Residues 55 to 69 are Cytoplasmic-facing; the sequence is MIALHFKRGNRRLID. A helical transmembrane segment spans residues 70–90; sequence IFIINLAASDFIFLVTVPLWM. The Extracellular segment spans residues 91 to 120; sequence DKEASLGLWRTGSFLCKGSSYVISVNMHCS. The helical transmembrane segment at 121-141 threads the bilayer; sequence VFLLTCMSMDRYLAIMHPALA. The Cytoplasmic portion of the chain corresponds to 142-149; it reads KRLRRRSS. The helical transmembrane segment at 150–170 threads the bilayer; the sequence is AYAVCAVVWIISCVLGLPTLL. Over 171-192 the chain is Extracellular; sequence SRELTHIEGKPYCAEKKPTSLK. A helical membrane pass occupies residues 193-213; it reads LMWGLVALITTFFVPLLSIVT. At 214 to 239 the chain is on the cytoplasmic side; that stretch reads CYCCITRRLCAHYQQSGKHNKKLKKS. Residues 240 to 260 traverse the membrane as a helical segment; that stretch reads IKIVIIAVAAFTVSWVPFNTF. At 261–284 the chain is on the extracellular side; sequence KLLAIVSGFQPEGLFHSEALQLAM. The chain crosses the membrane as a helical span at residues 285 to 305; the sequence is NVTGPLAFASSCVNPLIYYVF. Residues 306–360 are Cytoplasmic-facing; that stretch reads DSYIRRAIVRCLCPCLKTHNFGSSTETSDSHLTKALSNFIHAEDFIRRRKRSVSL. Phosphoserine is present on Ser359.

It belongs to the G-protein coupled receptor 1 family. As to quaternary structure, interacts with adapter YWHAE; this interaction promotes ER-to-Golgi transport of GPR15. In terms of processing, phosphorylation is necessary for YWHAE binding and efficient surface expression. Post-translationally, O-glycosylated. Sialylated O-glycans in the N-terminal tail inhibits binding of GPR15LG. Sulfation is required for efficient binding of GPR15LG. In terms of tissue distribution, highly expressed in gut tissues and lymphoid organs, largely restricted to TCRbeta+ cells. Expressed in fetal thymic dendritic epidermal T-cell precursors.

It localises to the cell membrane. Functionally, g protein-coupled receptor that plays an important role in immune homeostasis. Acts via its natural ligand GPR15LG, a chemokine-like polypeptide strongly expressed in gastrointestinal tissues. GPR15-GPR15LG signaling axis regulates intestinal homeostasis and inflammation through the migration of immune cells. Controls thereby the specific homing of T-cells, particularly FOXP3+ regulatory T-cells (Tregs), to the large intestine lamina propria. Also required for skin localization of thymus-derived dendritic epidermal T-cells. Plays an important role in mediating cytoprotective function as well as angiogenesis of thrombomodulin. Mechanistically, preferentially signals through the Gi/o pathway to inhibit adenylate cyclase activity and activate a phosphatidylinositol-calcium second messenger system that regulates the release of Ca(2+) ions from intracellular stores. This Mus musculus (Mouse) protein is G-protein coupled receptor 15 (Gpr15).